The sequence spans 350 residues: Quinolinate phosphoribosyltransferase [decarboxylating] 1 (350 aa).

Residues Arg141, Thr172–Lys174, Arg196, Lys206, Glu239, Asp266, Ser298–Asn300, and Ser319–Ala321 each bind substrate.

It belongs to the NadC/ModD family.

It catalyses the reaction nicotinate beta-D-ribonucleotide + CO2 + diphosphate = quinolinate + 5-phospho-alpha-D-ribose 1-diphosphate + 2 H(+). It participates in alkaloid biosynthesis; nicotine biosynthesis. It functions in the pathway cofactor biosynthesis; NAD(+) biosynthesis; nicotinate D-ribonucleotide from quinolinate: step 1/1. In terms of biological role, involved in the biosynthesis of pyridine alkaloid natural products, leading mainly to the production of anabasine, anatabine, nicotine and nornicotine, effective deterrents against herbivores with antiparasitic and pesticide properties (neurotoxins); nornicotine serves as the precursor in the synthesis of the carcinogen compound N'-nitrosonornicotine (NNN). Involved in the catabolism of quinolinic acid (QA). In Nicotiana glauca (Glaucous tobacco), this protein is Quinolinate phosphoribosyltransferase [decarboxylating] 1.